The sequence spans 593 residues: Probable E3 ubiquitin-protein ligase ARI2 (593 aa).

The TRIAD supradomain stretch occupies residues 120–334 (SMMSCDICVE…ISGHSCGRFQ (215 aa)). Residues Cys-124, Cys-127, Cys-141, His-143, Cys-146, Cys-149, Cys-168, Cys-173, Cys-215, Cys-221, Cys-237, Cys-239, Cys-244, Cys-247, His-252, Cys-257, Cys-284, and Cys-287 each contribute to the Zn(2+) site. Residues 124 to 173 (CDICVEDVPGYQLTRMDCGHSFCNNCWTGHFTVKINEGQSKRIICMAHKC) form an RING-type 1 zinc finger. The segment at 195–257 (EKFDRFLLES…SSQAHSPCSC (63 aa)) adopts an IBR-type zinc-finger fold. The RING-type 2; atypical zinc finger occupies 284–312 (CPKCHKPVEKNGGCNLVTCLCRQSFCWLC). Residue Cys-297 is part of the active site. Positions 302, 304, 309, 312, 320, and 330 each coordinate Zn(2+).

The protein belongs to the RBR family. Ariadne subfamily. The cofactor is Zn(2+). As to expression, ubiquitous.

It catalyses the reaction [E2 ubiquitin-conjugating enzyme]-S-ubiquitinyl-L-cysteine + [acceptor protein]-L-lysine = [E2 ubiquitin-conjugating enzyme]-L-cysteine + [acceptor protein]-N(6)-ubiquitinyl-L-lysine.. The protein operates within protein modification; protein ubiquitination. Its function is as follows. Might act as an E3 ubiquitin-protein ligase, or as part of E3 complex, which accepts ubiquitin from specific E2 ubiquitin-conjugating enzymes and then transfers it to substrates. The sequence is that of Probable E3 ubiquitin-protein ligase ARI2 (ARI2) from Arabidopsis thaliana (Mouse-ear cress).